We begin with the raw amino-acid sequence, 471 residues long: Cytidine and dCMP deaminase domain-containing protein 1 (471 aa).

A disordered region spans residues 1–27 (MAESNSWRSHRESDGNRSIPNGDDARN). CMP/dCMP-type deaminase domains are found at residues 57–153 (LWME…LLSE) and 312–460 (GVIR…KLNG). 4 residues coordinate Zn(2+): His99, Cys124, Cys127, and His393. Glu395 (proton donor) is an active-site residue. Cys421 and Cys424 together coordinate Zn(2+).

Belongs to the cytidine and deoxycytidylate deaminase family. The cofactor is Zn(2+).

The enzyme catalyses 2'-deoxycytidine + H2O + H(+) = 2'-deoxyuridine + NH4(+). It catalyses the reaction cytidine + H2O + H(+) = uridine + NH4(+). In terms of biological role, catalyzes the deamination of cytidine and deoxycytidine into uridine and deoxyuridine, respectively. The protein is Cytidine and dCMP deaminase domain-containing protein 1 (cdadc1) of Danio rerio (Zebrafish).